We begin with the raw amino-acid sequence, 265 residues long: Adenosylcobinamide-GDP ribazoletransferase (265 aa).

A run of 5 helical transmembrane segments spans residues 59 to 79, 113 to 133, 141 to 161, 183 to 203, and 206 to 226; these read LSWI…SVLI, IGTF…LLLV, WIFL…ALLL, LPPF…VYFL, and FQNQ…FVFY.

Belongs to the CobS family. It depends on Mg(2+) as a cofactor.

The protein localises to the cell inner membrane. It carries out the reaction alpha-ribazole + adenosylcob(III)inamide-GDP = adenosylcob(III)alamin + GMP + H(+). The catalysed reaction is alpha-ribazole 5'-phosphate + adenosylcob(III)inamide-GDP = adenosylcob(III)alamin 5'-phosphate + GMP + H(+). It participates in cofactor biosynthesis; adenosylcobalamin biosynthesis; adenosylcobalamin from cob(II)yrinate a,c-diamide: step 7/7. In terms of biological role, joins adenosylcobinamide-GDP and alpha-ribazole to generate adenosylcobalamin (Ado-cobalamin). Also synthesizes adenosylcobalamin 5'-phosphate from adenosylcobinamide-GDP and alpha-ribazole 5'-phosphate. This is Adenosylcobinamide-GDP ribazoletransferase from Leptospira interrogans serogroup Icterohaemorrhagiae serovar copenhageni (strain Fiocruz L1-130).